A 212-amino-acid polypeptide reads, in one-letter code: Ribosomal RNA small subunit methyltransferase G (212 aa).

Residues glycine 75, leucine 80, 126-127 (AQ), and arginine 141 each bind S-adenosyl-L-methionine.

This sequence belongs to the methyltransferase superfamily. RNA methyltransferase RsmG family.

The protein localises to the cytoplasm. Its function is as follows. Specifically methylates the N7 position of guanine in position 518 of 16S rRNA. This Beutenbergia cavernae (strain ATCC BAA-8 / DSM 12333 / CCUG 43141 / JCM 11478 / NBRC 16432 / NCIMB 13614 / HKI 0122) protein is Ribosomal RNA small subunit methyltransferase G.